Reading from the N-terminus, the 835-residue chain is Transcription intermediary factor 1-beta (835 aa).

The span at 14–24 (AATAASAASGS) shows a compositional bias: low complexity. Positions 14 to 57 (AATAASAASGSPGSGEGSAGGEKRPAASSAAAASASASSPAGGG) are disordered. Phosphoserine is present on residues Ser24, Ser27, and Ser31. A Glycyl lysine isopeptide (Lys-Gly) (interchain with G-Cter in SUMO2) cross-link involves residue Lys36. The segment covering 39–53 (AASSAAAASASASSP) has biased composition (low complexity). The residue at position 52 (Ser52) is a Phosphoserine. The RING-type zinc-finger motif lies at 67–123 (CGVCRERLRPERDPRLLPCLHSACSACLGPATPAAANNSGDGGSAGDGAMVDCPVCK). Lys129 is covalently cross-linked (Glycyl lysine isopeptide (Lys-Gly) (interchain with G-Cter in SUMO2)). Position 140 is a phosphoserine (Ser140). Residues 150–197 (DANQCCTSCEDNAPATSYCVECSEPLCETCVEAHQRVKYTKDHTVRST) form a B box-type 1; atypical zinc finger. Zn(2+)-binding residues include Cys155, Cys158, Cys179, and His183. Residue Lys201 forms a Glycyl lysine isopeptide (Lys-Gly) (interchain with G-Cter in SUMO2) linkage. A B box-type 2 zinc finger spans residues 206-247 (ERTVYCNVHKHEPLVLFCESCDTLTCRDCQLNAHKDHQYQFL). Residues Cys211, His214, Cys234, and His239 each contribute to the Zn(2+) site. The interval 248–378 (EDAVRNQRKL…LIYFQLHRAL (131 aa)) is leucine zipper alpha helical coiled-coil region. Residues 249 to 378 (DAVRNQRKLL…LIYFQLHRAL (130 aa)) form an interaction with MAGEC2 region. Glycyl lysine isopeptide (Lys-Gly) (interchain with G-Cter in SUMO2) cross-links involve residues Lys256 and Lys263. The residue at position 268 (Lys268) is an N6-acetyllysine. Residue Lys274 forms a Glycyl lysine isopeptide (Lys-Gly) (interchain with G-Cter in SUMO2) linkage. Lys306 is modified (N6-acetyllysine; alternate). Residue Lys306 forms a Glycyl lysine isopeptide (Lys-Gly) (interchain with G-Cter in SUMO2); alternate linkage. Lys321 participates in a covalent cross-link: Glycyl lysine isopeptide (Lys-Gly) (interchain with G-Cter in SUMO2). At Lys342 the chain carries N6-acetyllysine. Residue Lys368 forms a Glycyl lysine isopeptide (Lys-Gly) (interchain with G-Cter in SUMO2) linkage. An involved in binding PPP1CA region spans residues 368–372 (KLIYF). At Lys379 the chain carries N6-acetyllysine; alternate. A Glycyl lysine isopeptide (Lys-Gly) (interchain with G-Cter in SUMO2); alternate cross-link involves residue Lys379. A Glycyl lysine isopeptide (Lys-Gly) (interchain with G-Cter in SUMO1); alternate cross-link involves residue Lys379. Residue Lys409 forms a Glycyl lysine isopeptide (Lys-Gly) (interchain with G-Cter in SUMO2) linkage. Residues 413 to 481 (ERPGTNSTGP…SRSGEGEVSG (69 aa)) are disordered. The residue at position 419 (Ser419) is a Phosphoserine. Lys436 participates in a covalent cross-link: Glycyl lysine isopeptide (Lys-Gly) (interchain with G-Cter in SUMO2). The segment covering 436 to 445 (KQGSGSSQPM) has biased composition (polar residues). 2 positions are modified to phosphoserine: Ser439 and Ser441. A Glycyl lysine isopeptide (Lys-Gly) (interchain with G-Cter in SUMO2); alternate cross-link involves residue Lys470. A Glycyl lysine isopeptide (Lys-Gly) (interchain with G-Cter in SUMO1); alternate cross-link involves residue Lys470. Citrulline is present on Arg471. Position 472 is a phosphoserine (Ser472). Residue Arg473 is modified to Citrulline. A phosphoserine mark is found at Ser474, Ser480, and Ser490. The segment at 477–514 (GEVSGLMRKVPRVSLERLDLDLTSDSQPPVFKVFPGST) is HP1 box. The PxVxL motif motif lies at 482–495 (LMRKVPRVSLERLD). Thr499 bears the Phosphothreonine mark. The residue at position 502 (Ser502) is a Phosphoserine. A Glycyl lysine isopeptide (Lys-Gly) (interchain with G-Cter in SUMO2) cross-link involves residue Lys508. A Glycyl lysine isopeptide (Lys-Gly) (interchain with G-Cter in SUMO2); alternate cross-link involves residue Lys555. Lys555 is covalently cross-linked (Glycyl lysine isopeptide (Lys-Gly) (interchain with G-Cter in SUMO); alternate). Residue Lys576 forms a Glycyl lysine isopeptide (Lys-Gly) (interchain with G-Cter in SUMO2) linkage. Ser595 is subject to Phosphoserine. A PHD-type zinc finger spans residues 626 to 673 (ATICRVCQKPGDLVMCNQCEFCFHLDCHLPSLQDVPGEEWSCSLCHVL). Lys677 participates in a covalent cross-link: Glycyl lysine isopeptide (Lys-Gly) (interchain with G-Cter in SUMO). Phosphoserine is present on residues Ser684, Ser690, and Ser698. In terms of domain architecture, Bromo spans 696-800 (KLSPANQRKC…RFFETRMNDA (105 aa)). Lys751 participates in a covalent cross-link: Glycyl lysine isopeptide (Lys-Gly) (interchain with G-Cter in SUMO2); alternate. Lys751 participates in a covalent cross-link: Glycyl lysine isopeptide (Lys-Gly) (interchain with G-Cter in SUMO1); alternate. Lys751 is covalently cross-linked (Glycyl lysine isopeptide (Lys-Gly) (interchain with G-Cter in SUMO); alternate). Position 753 is a phosphoserine (Ser753). The residue at position 756 (Tyr756) is a Phosphotyrosine. Ser758 carries the post-translational modification Phosphoserine. An N6-acetyllysine; alternate mark is found at Lys771, Lys775, and Lys780. Glycyl lysine isopeptide (Lys-Gly) (interchain with G-Cter in SUMO2); alternate cross-links involve residues Lys771, Lys775, and Lys780. Residue Lys780 forms a Glycyl lysine isopeptide (Lys-Gly) (interchain with G-Cter in SUMO1); alternate linkage. Position 785 is a phosphoserine (Ser785). A Glycyl lysine isopeptide (Lys-Gly) (interchain with G-Cter in SUMO2) cross-link involves residue Lys805. The residue at position 825 (Ser825) is a Phosphoserine; by ATM and ATR and dsDNA kinase.

It belongs to the TRIM/RBCC family. As to quaternary structure, interacts with ZNF382. Interacts with SETX. Oligomer; the RBCC domain homotrimerizes and interacts with one molecule of KRAB to form the KRAB-KAP1 corepressor complex. Binding to a KRAB domain is an absolute requirement for silencing gene expression. Interacts with CEBPB and NR3C1. Interacts with a number of KRAB-ZFP proteins including ZNF10, ZFP53, ZFP68 and ZNF256. Interacts with NCOR1, NR3C1 and CHD3. Interacts with CEBPB (via the RING-type and PHD-type zinc fingers). Component of a ternary complex that includes TRIM28, a HP1 protein (CBX1, CBX3 OR CBX5), a KRAB domain-containing protein, and DNA. Interacts with CBX5 (via the PxVxL motif); the interaction occurs in interphase nuclei and competes for binding POGZ. Interacts with POGZ; the interaction competes for interaction with CBX5. Interacts with SETDB1; the interaction is enhanced by KAP1 sumoylation, stimulates SETDB1 histone methyltransferase activity and gene silencing. Interacts (via the PHD-type zinc finger) with UBE2I; the interaction is required for sumoylation and repressor activity. Component of the TRIM28/KAP1-ERBB4-MDM2 complex involved in connecting growth factor and DNA damage responses. Interacts directly with ERBB4; the interaction represses ERBB4-mediated transcription activity. Interacts with MDM2; the interaction contributes to p53/TP53 inactivation. Component of the TRIM28/KAP1-MDM2-p53/TP53; involved in regulating p53/TP53 stabilization and activity. Interacts (via the leucine zipper alpha helical coiled-coil) with E2F1 (central region); the interaction inhibits E2F1 acetylation and transcriptional activity. Interacts with PPP1CA; the interaction dephosphorylates TRIM28 at Ser-824 and forms a complex at the p21 promoter site. Interacts with PPP1CB; the interaction is weak but is increased on dephosphorylation at Ser-824. Interacts with SMARCAD1. Interacts with, and sumoylates IRF7. Interacts with MAGEC2. Part of a complex composed of TRIM28, HDAC1, HDAC2 and EHMT2. Interacts with AICDA. The large PER complex involved in the histone methylation is composed of at least PER2, CBX3, TRIM28, SUV39H1 and/or SUV39H2; CBX3 mediates the formation of the complex. Interacts with NR4A3; the interactions potentiates NR4A3 activity on NurRE promoter. Interacts (unphosphorylated or phosphorylated form) with ZBTB1 (via BTB domain). Probably part of a corepressor complex containing ZNF304, TRIM28, SETDB1 and DNMT1. Interacts with ATRX. Forms a complex with ATRX, SETDB1 and ZNF274. Interacts with ZFP568; the interaction mediates ZFP568 transcriptional repression activity. Interacts with RRP1B. Interacts with CRY1. Interacts with ZNF263; recruited to the SIX3 promoter along with other proteins involved in chromatin modification and transcriptional corepression where it contributes to transcriptional repression. Interacts with CYREN (via XLF motif). Interacts with TRIM17; this interaction prevents TRIM28 activity. Interacts with ZNF746. Interacts with PHF13. Interacts with ZNF354C. Interacts with ZNF432; the interaction is independent of PARP1. Post-translationally, ATM-induced phosphorylation on Ser-825 represses sumoylation leading to the de-repression of expression of a subset of genes involved in cell cycle control and apoptosis in response to genotoxic stress. Dephosphorylation by the phosphatases, PPP1CA and PP1CB forms, allows sumoylation and expression of TRIM28 target genes. Sumoylation/desumoylation events regulate TRIM28-mediated transcriptional repression. Sumoylation is required for interaction with CHD3 and SETDB1 and the corepressor activity. Represses and is repressed by Ser-824 phosphorylation. Enhances the TRIM28 corepressor activity, inhibiting transcriptional activity of a number of genes including GADD45A and CDKN1A/p21. Lys-555, Lys-780 and Lys-805 are the major sites of sumoylation. In response to Dox-induced DNA damage, enhanced phosphorylation on Ser-825 prevents sumoylation and allows de-repression of CDKN1A/p21. In terms of processing, auto-ubiquitinated; enhanced by MAGEA2 and MAGEC2. Post-translationally, citrullinated by PADI4. ADP-ribosylated by SIRT6, promoting TRIM28/KAP1 interaction with CBX5, thereby contributing to the packaging of LINE-1 retrotransposon elements into transcriptionally repressive heterochromatin.

It is found in the nucleus. The enzyme catalyses S-ubiquitinyl-[E2 ubiquitin-conjugating enzyme]-L-cysteine + [acceptor protein]-L-lysine = [E2 ubiquitin-conjugating enzyme]-L-cysteine + N(6)-ubiquitinyl-[acceptor protein]-L-lysine.. It functions in the pathway protein modification; protein sumoylation. Its function is as follows. Nuclear corepressor for KRAB domain-containing zinc finger proteins (KRAB-ZFPs). Mediates gene silencing by recruiting CHD3, a subunit of the nucleosome remodeling and deacetylation (NuRD) complex, and SETDB1 (which specifically methylates histone H3 at 'Lys-9' (H3K9me)) to the promoter regions of KRAB target genes. Enhances transcriptional repression by coordinating the increase in H3K9me, the decrease in histone H3 'Lys-9 and 'Lys-14' acetylation (H3K9ac and H3K14ac, respectively) and the disposition of HP1 proteins to silence gene expression. Recruitment of SETDB1 induces heterochromatinization. May play a role as a coactivator for CEBPB and NR3C1 in the transcriptional activation of ORM1. Also a corepressor for ERBB4. Inhibits E2F1 activity by stimulating E2F1-HDAC1 complex formation and inhibiting E2F1 acetylation. May serve as a partial backup to prevent E2F1-mediated apoptosis in the absence of RB1. Important regulator of CDKN1A/p21(CIP1). Has E3 SUMO-protein ligase activity toward itself via its PHD-type zinc finger. Also specifically sumoylates IRF7, thereby inhibiting its transactivation activity. Ubiquitinates p53/TP53 leading to its proteasomal degradation; the function is enhanced by MAGEC2 and MAGEA2, and possibly MAGEA3 and MAGEA6. Mediates the nuclear localization of KOX1, ZNF268 and ZNF300 transcription factors. In association with isoform 2 of ZFP90, is required for the transcriptional repressor activity of FOXP3 and the suppressive function of regulatory T-cells (Treg). Probably forms a corepressor complex required for activated KRAS-mediated promoter hypermethylation and transcriptional silencing of tumor suppressor genes (TSGs) or other tumor-related genes in colorectal cancer (CRC) cells. Required to maintain a transcriptionally repressive state of genes in undifferentiated embryonic stem cells (ESCs). In ESCs, in collaboration with SETDB1, is also required for H3K9me3 and silencing of endogenous and introduced retroviruses in a DNA-methylation independent-pathway. Associates at promoter regions of tumor suppressor genes (TSGs) leading to their gene silencing. The SETDB1-TRIM28-ZNF274 complex may play a role in recruiting ATRX to the 3'-exons of zinc finger genes with atypical chromatin signatures to establish or maintain/protect H3K9me3 at these transcriptionally active regions. This is Transcription intermediary factor 1-beta from Rattus norvegicus (Rat).